A 215-amino-acid chain; its full sequence is Rho-related GTP-binding protein RhoF (215 aa).

At methionine 1 the chain carries N-acetylmethionine. Residue 30–37 participates in GTP binding; the sequence is GDGGCGKT. An Effector region motif is present at residues 52–60; that stretch reads YAPSVFEKY. Residues 77-81 and 135-138 contribute to the GTP site; these read DTAGQ and CKTD. Cysteine 212 is subject to Cysteine methyl ester. Cysteine 212 is lipidated: S-geranylgeranyl cysteine. The propeptide at 213–215 is removed in mature form; that stretch reads LLL.

Belongs to the small GTPase superfamily. Rho family.

The protein localises to the cell membrane. It is found in the cytoplasm. Its subcellular location is the cytoskeleton. Functionally, plasma membrane-associated small GTPase which cycles between an active GTP-bound and an inactive GDP-bound state. Causes the formation of thin, actin-rich surface projections called filopodia. Functions cooperatively with CDC42 and Rac to generate additional structures, increasing the diversity of actin-based morphology. This Bos taurus (Bovine) protein is Rho-related GTP-binding protein RhoF (RHOF).